The primary structure comprises 264 residues: Thiamine pyrophosphokinase 1 (264 aa).

Positions 1–12 (MPLPTMTHSSSF) are enriched in polar residues. The disordered stretch occupies residues 1–27 (MPLPTMTHSSSFLRLPATSSPHPPPAD).

This sequence belongs to the thiamine pyrophosphokinase family.

The protein resides in the cytoplasm. Its subcellular location is the cytosol. It carries out the reaction thiamine + ATP = thiamine diphosphate + AMP + H(+). The protein operates within cofactor biosynthesis; thiamine diphosphate biosynthesis; thiamine diphosphate from thiamine: step 1/1. Functionally, catalyzes the phosphorylation of thiamine to thiamine pyrophosphate (TPP). TPP is an active cofactor for enzymes involved in glycolysis and energy production. Plant leaves require high levels of TPP for photosynthesis and carbohydrate metabolism. The protein is Thiamine pyrophosphokinase 1 (TPK1) of Oryza sativa subsp. japonica (Rice).